We begin with the raw amino-acid sequence, 377 residues long: Chaperone protein DnaJ (377 aa).

Positions 5–70 (DYYQILGIPK…EKRSAYDQYG (66 aa)) constitute a J domain. The CR-type zinc-finger motif lies at 132-210 (GIKKEIQIPT…CHGQGRVETY (79 aa)). The Zn(2+) site is built by Cys145, Cys148, Cys162, Cys165, Cys184, Cys187, Cys198, and Cys201. CXXCXGXG motif repeat units lie at residues 145–152 (CKTCYGSG), 162–169 (CSTCHGKG), 184–191 (CPTCHGKG), and 198–205 (CNLCHGQG).

This sequence belongs to the DnaJ family. As to quaternary structure, homodimer. Zn(2+) serves as cofactor.

It is found in the cytoplasm. In terms of biological role, participates actively in the response to hyperosmotic and heat shock by preventing the aggregation of stress-denatured proteins and by disaggregating proteins, also in an autonomous, DnaK-independent fashion. Unfolded proteins bind initially to DnaJ; upon interaction with the DnaJ-bound protein, DnaK hydrolyzes its bound ATP, resulting in the formation of a stable complex. GrpE releases ADP from DnaK; ATP binding to DnaK triggers the release of the substrate protein, thus completing the reaction cycle. Several rounds of ATP-dependent interactions between DnaJ, DnaK and GrpE are required for fully efficient folding. Also involved, together with DnaK and GrpE, in the DNA replication of plasmids through activation of initiation proteins. This Buchnera aphidicola subsp. Acyrthosiphon pisum (strain Tuc7) protein is Chaperone protein DnaJ.